The following is a 329-amino-acid chain: Glycerol-3-phosphate dehydrogenase [NAD(P)+] (329 aa).

3 residues coordinate NADPH: W11, R30, and K103. Sn-glycerol 3-phosphate contacts are provided by K103, G132, and S134. A136 contributes to the NADPH binding site. Sn-glycerol 3-phosphate contacts are provided by K187, D240, S250, R251, and N252. K187 (proton acceptor) is an active-site residue. R251 lines the NADPH pocket. The NADPH site is built by V275 and E277.

Belongs to the NAD-dependent glycerol-3-phosphate dehydrogenase family.

It localises to the cytoplasm. It catalyses the reaction sn-glycerol 3-phosphate + NAD(+) = dihydroxyacetone phosphate + NADH + H(+). It carries out the reaction sn-glycerol 3-phosphate + NADP(+) = dihydroxyacetone phosphate + NADPH + H(+). It functions in the pathway membrane lipid metabolism; glycerophospholipid metabolism. Catalyzes the reduction of the glycolytic intermediate dihydroxyacetone phosphate (DHAP) to sn-glycerol 3-phosphate (G3P), the key precursor for phospholipid synthesis. This is Glycerol-3-phosphate dehydrogenase [NAD(P)+] from Nitrosomonas eutropha (strain DSM 101675 / C91 / Nm57).